Reading from the N-terminus, the 551-residue chain is Prunin 1 Pru du 6.0101 (551 aa).

An N-terminal signal peptide occupies residues 1-20; sequence MAKAFVFSLCLLLVFNGCLA. 2 disulfides stabilise this stretch: cysteine 32–cysteine 65 and cysteine 108–cysteine 374. The Cupin type-1 1 domain maps to 37–312; that stretch reads LQAREPDNRI…ALNVNEETAR (276 aa). 3 disordered regions span residues 111-194, 238-293, and 311-361; these read TFEE…QKTR, NPRK…NVFS, and ARNL…QQQG. Low complexity-rich tracts occupy residues 114 to 124, 132 to 148, and 168 to 185; these read ESQQSSQQGRQ, QQQQ…QQEQ, and QEQQ…QQFR. IgE-binding stretches follow at residues 118–132, 145–159, 161–175, and 225–239; these read SSQQ…QERQ, QQEQ…QQGR, QQEE…QGQQ, and LFHV…DQNP. A compositionally biased stretch (low complexity) spans 254–275; the sequence is QQGQSQPRQQGEQGRPGQHQQP. Positions 281–295 are igE-binding; that stretch reads QQEQQGSGNNVFSGF. Polar residues-rich tracts occupy residues 282 to 293 and 311 to 323; these read QEQQGSGNNVFS and ARNL…NRNQ. Basic and acidic residues predominate over residues 339-350; that stretch reads GRQEREHEERQQ. Residues 351–361 show a composition bias toward low complexity; the sequence is EQLQQERQQQG. The NGXEET; peptidase recognition motif signature appears at 367 to 372; that stretch reads NGLEET. Positions 380–529 constitute a Cupin type-1 2 domain; the sequence is ENIGNPERAD…AYQISREQAR (150 aa). An igE-binding region spans residues 510–524; that stretch reads RALPDEVLANAYQIS.

Belongs to the 11S seed storage protein (globulins) family. In terms of assembly, hexamer of two trimers; each subunit is composed of an acidic and a basic chain derived from a single precursor and linked by a disulfide bond. Post-translationally, proteolytically processed from a single precursor to produce an acidic and a basic chain that are linked by a disulfide bond. In terms of tissue distribution, expressed in seed (at protein level).

Its function is as follows. Seed storage protein. This chain is Prunin 1 Pru du 6.0101, found in Prunus dulcis (Almond).